The chain runs to 594 residues: Beta-mannosyltransferase 3 (594 aa).

The Cytoplasmic segment spans residues 1-6; sequence MRIRSN. The helical transmembrane segment at 7–27 threads the bilayer; that stretch reads VLLLSTAGALALVWFAVVFSW. At 28–594 the chain is on the extracellular side; it reads DDKSIFGIPT…KDEVKDTKAK (567 aa). A glycan (N-linked (GlcNAc...) asparagine) is linked at asparagine 305. Residues 512–594 are a coiled coil; that stretch reads VTRGEEDRLK…KDEVKDTKAK (83 aa). Residues 517–558 show a composition bias toward basic and acidic residues; sequence EDRLKNKEKERKIEEKRKKEEERKKKEEEKKKKEEEEKKKKE. A disordered region spans residues 517-564; the sequence is EDRLKNKEKERKIEEKRKKEEERKKKEEEKKKKEEEEKKKKEEEEEEE.

This sequence belongs to the BMT family.

Its subcellular location is the membrane. In terms of biological role, beta-mannosyltransferase involved in cell wall biosynthesis. The polypeptide is Beta-mannosyltransferase 3 (BMT3) (Komagataella phaffii (strain ATCC 76273 / CBS 7435 / CECT 11047 / NRRL Y-11430 / Wegner 21-1) (Yeast)).